A 224-amino-acid chain; its full sequence is Synaptogyrin-2 (224 aa).

An N-acetylmethionine modification is found at Met1. At Ser3 the chain carries Phosphoserine. One can recognise an MARVEL domain in the interval 20-171; it reads FLTQPQVVAR…LASLAYQRYK (152 aa). 4 consecutive transmembrane segments (helical) span residues 26–46, 73–93, 105–125, and 147–167; these read VVAR…IYGE, AIGV…AYFP, VIGD…GFCF, and AAIT…SLAY.

The protein belongs to the synaptogyrin family. In terms of assembly, (Microbial infection) Interacts with SFTS phlebovirus protein NSs; may be involved in virus replication. May be tyrosine phosphorylated by Src. As to expression, ubiquitous; low expression in brain.

It localises to the cytoplasmic vesicle membrane. The protein localises to the cytoplasmic vesicle. Its subcellular location is the secretory vesicle. The protein resides in the synaptic vesicle membrane. It is found in the lipid droplet. Functionally, may play a role in regulated exocytosis. In neuronal cells, modulates the localization of synaptophysin/SYP into synaptic-like microvesicles and may therefore play a role in the formation and/or the maturation of this vesicles. May also play a role in GLUT4 storage and transport to the plasma membrane. Its function is as follows. (Microbial infection) May play a role in the assembly of cytoplasmic inclusion bodies required for SFTS phlebovirus replication. In Homo sapiens (Human), this protein is Synaptogyrin-2.